A 494-amino-acid polypeptide reads, in one-letter code: Guanosine-5'-triphosphate,3'-diphosphate pyrophosphatase (494 aa).

This sequence belongs to the GppA/Ppx family. GppA subfamily.

It catalyses the reaction guanosine 3'-diphosphate 5'-triphosphate + H2O = guanosine 3',5'-bis(diphosphate) + phosphate + H(+). It functions in the pathway purine metabolism; ppGpp biosynthesis; ppGpp from GTP: step 2/2. Functionally, catalyzes the conversion of pppGpp to ppGpp. Guanosine pentaphosphate (pppGpp) is a cytoplasmic signaling molecule which together with ppGpp controls the 'stringent response', an adaptive process that allows bacteria to respond to amino acid starvation, resulting in the coordinated regulation of numerous cellular activities. The sequence is that of Guanosine-5'-triphosphate,3'-diphosphate pyrophosphatase from Shigella sonnei (strain Ss046).